Here is a 386-residue protein sequence, read N- to C-terminus: Zinc finger CCCH domain-containing protein 39 (386 aa).

Positions 1–90 are disordered; it reads MDSSYSDSRP…SSSNPWMVPS (90 aa). Residues 20-37 are compositionally biased toward polar residues; that stretch reads WNQTQMIDSMANPMNNEQ. The segment covering 43 to 58 has biased composition (low complexity); the sequence is LSESQSQSQPSQQLQP. Positions 72 to 85 are enriched in polar residues; the sequence is NPASSFPQPSSSNP. The C3H1-type 1 zinc-finger motif lies at 104 to 131; that stretch reads FYKTRMCAKFRAGTCRNGELCNFAHGIE. The interval 136 to 166 is disordered; the sequence is PPSNWQEIVGPPPAGQDRERERERERERERP. Residues 151 to 166 show a composition bias toward basic and acidic residues; sequence QDRERERERERERERP. 2 C3H1-type zinc fingers span residues 183 to 211 and 269 to 297; these read ILRM…HEDL and YWKT…HGQA.

The chain is Zinc finger CCCH domain-containing protein 39 from Arabidopsis thaliana (Mouse-ear cress).